The following is a 98-amino-acid chain: MKAVGAWLLCLLLLGLALQGAASRAHQHSMEIRTPDINPAWYAGRGIRPVGRFGRRRAAPGDGPRPGPRRELACIPLEGGAEPSRALLGRLTAQLVQE.

An N-terminal signal peptide occupies residues 1-22 (MKAVGAWLLCLLLLGLALQGAA). Phenylalanine amide is present on F53. A propeptide spanning residues 58 to 98 (AAPGDGPRPGPRRELACIPLEGGAEPSRALLGRLTAQLVQE) is cleaved from the precursor.

In terms of tissue distribution, more abundantly expressed in the brainstem than the hypothalamus.

It localises to the secreted. Its function is as follows. Stimulates prolactin (PRL) release and regulates the expression of prolactin through its receptor GPR10. May stimulate lactotrophs directly to secrete PRL. This chain is Prolactin-releasing peptide (PRLH), found in Ovis aries (Sheep).